We begin with the raw amino-acid sequence, 494 residues long: Cobyric acid synthase (494 aa).

One can recognise a GATase cobBQ-type domain in the interval glutamate 249–tryptophan 443. Cysteine 330 serves as the catalytic Nucleophile. The active site involves histidine 435.

The protein belongs to the CobB/CobQ family. CobQ subfamily.

Its pathway is cofactor biosynthesis; adenosylcobalamin biosynthesis. In terms of biological role, catalyzes amidations at positions B, D, E, and G on adenosylcobyrinic A,C-diamide. NH(2) groups are provided by glutamine, and one molecule of ATP is hydrogenolyzed for each amidation. This is Cobyric acid synthase from Crocosphaera subtropica (strain ATCC 51142 / BH68) (Cyanothece sp. (strain ATCC 51142)).